We begin with the raw amino-acid sequence, 940 residues long: DNA gyrase subunit A (940 aa).

The tract at residues 1 to 22 is disordered; that stretch reads MSDHTNPPSAPPDDDPNGGSLL. The Topo IIA-type catalytic domain occupies 48–538; it reads LPDARDGLKP…SLADQDDESL (491 aa). The active-site O-(5'-phospho-DNA)-tyrosine intermediate is Tyr136. The short motif at 565–571 is the GyrA-box element; it reads QHRGGRG. The span at 914–924 shows a compositional bias: acidic residues; it reads ESVDDNGDDAD. Residues 914 to 940 form a disordered region; the sequence is ESVDDNGDDADSVAPAAPDGQVTDSDD.

It belongs to the type II topoisomerase GyrA/ParC subunit family. As to quaternary structure, heterotetramer, composed of two GyrA and two GyrB chains. In the heterotetramer, GyrA contains the active site tyrosine that forms a transient covalent intermediate with DNA, while GyrB binds cofactors and catalyzes ATP hydrolysis.

Its subcellular location is the cytoplasm. The enzyme catalyses ATP-dependent breakage, passage and rejoining of double-stranded DNA.. In terms of biological role, a type II topoisomerase that negatively supercoils closed circular double-stranded (ds) DNA in an ATP-dependent manner to modulate DNA topology and maintain chromosomes in an underwound state. Negative supercoiling favors strand separation, and DNA replication, transcription, recombination and repair, all of which involve strand separation. Also able to catalyze the interconversion of other topological isomers of dsDNA rings, including catenanes and knotted rings. Type II topoisomerases break and join 2 DNA strands simultaneously in an ATP-dependent manner. This Granulibacter bethesdensis (strain ATCC BAA-1260 / CGDNIH1) protein is DNA gyrase subunit A.